A 452-amino-acid polypeptide reads, in one-letter code: Transcription factor ETV6 (452 aa).

Lysine 11 carries the N6-acetyllysine; alternate modification. Lysine 11 participates in a covalent cross-link: Glycyl lysine isopeptide (Lys-Gly) (interchain with G-Cter in SUMO2); alternate. Threonine 18 carries the phosphothreonine modification. Serine 22 carries the phosphoserine modification. The region spanning 40-124 is the PNT domain; sequence ALRMEEDSIR…ELLQHILKQR (85 aa). A disordered region spans residues 154–262; that stretch reads EDNGVQRTSR…PRPSSPRQEG (109 aa). Polar residues predominate over residues 158–174; sequence VQRTSRPSAENVHQNPP. Phosphoserine is present on residues serine 213, serine 238, and serine 257. A Glycyl lysine isopeptide (Lys-Gly) (interchain with G-Cter in SUMO2) cross-link involves residue lysine 288. Lysine 302 carries the post-translational modification N6-acetyllysine; alternate. Residue lysine 302 forms a Glycyl lysine isopeptide (Lys-Gly) (interchain with G-Cter in SUMO2); alternate linkage. Phosphoserine is present on serine 323. Residues 339–420 constitute a DNA-binding region (ETS); that stretch reads RLLWDYVYQL…PGQRLLFRFM (82 aa). Residues lysine 403 and lysine 421 each participate in a glycyl lysine isopeptide (Lys-Gly) (interchain with G-Cter in SUMO2) cross-link.

The protein belongs to the ETS family. Can form homodimers or heterodimers with TEL2 or FLI1. Interacts with L3MBTL1 and HDAC9.

It localises to the nucleus. Transcriptional repressor; binds to the DNA sequence 5'-CCGGAAGT-3'. Plays a role in hematopoiesis and malignant transformation. This is Transcription factor ETV6 (ETV6) from Bos taurus (Bovine).